The primary structure comprises 123 residues: Small ribosomal subunit protein uS12 (123 aa).

Positions 1-25 are disordered; sequence MPTINQLIRKRRKSSLARKKSPALQ. Positions 8–21 are enriched in basic residues; the sequence is IRKRRKSSLARKKS. Asp89 is subject to 3-methylthioaspartic acid.

This sequence belongs to the universal ribosomal protein uS12 family. As to quaternary structure, part of the 30S ribosomal subunit. Contacts proteins S8 and S17. May interact with IF1 in the 30S initiation complex.

Its function is as follows. With S4 and S5 plays an important role in translational accuracy. In terms of biological role, interacts with and stabilizes bases of the 16S rRNA that are involved in tRNA selection in the A site and with the mRNA backbone. Located at the interface of the 30S and 50S subunits, it traverses the body of the 30S subunit contacting proteins on the other side and probably holding the rRNA structure together. The combined cluster of proteins S8, S12 and S17 appears to hold together the shoulder and platform of the 30S subunit. The sequence is that of Small ribosomal subunit protein uS12 from Chlamydia pneumoniae (Chlamydophila pneumoniae).